The chain runs to 483 residues: Threonine synthase-like 2 (483 aa).

Residue Lys-113 is modified to N6-(pyridoxal phosphate)lysine.

The protein belongs to the threonine synthase family. Pyridoxal 5'-phosphate serves as cofactor.

Functionally, acts as a catabolic phospho-lyase on both gamma- and beta-phosphorylated substrates. Degrades O-phospho-threonine (PThr) to alpha-ketobutyrate, ammonia and phosphate. Also degrades O-phospho-homoserine (PHS), but this is not its physiological substrate. This chain is Threonine synthase-like 2 (Thnsl2), found in Mus musculus (Mouse).